Reading from the N-terminus, the 231-residue chain is Cuticle protein LPCP-23 (231 aa).

The N-terminal stretch at 1–17 is a signal peptide; that stretch reads MAFKFVVFAAALAYANA. 2 consecutive repeat copies span residues 130–133 and 199–202.

Component of the cuticle of Tenebrio molitor. This Tenebrio molitor (Yellow mealworm beetle) protein is Cuticle protein LPCP-23 (LPCP-23).